The chain runs to 374 residues: Chaperone protein DnaJ (374 aa).

Residues 5-70 (DYYEVLGVNR…RKRASYDQFG (66 aa)) enclose the J domain. The CR-type zinc-finger motif lies at 133 to 210 (GLSRTIKVPT…CHGQGRQQQT (78 aa)). Zn(2+) contacts are provided by Cys146, Cys149, Cys162, Cys165, Cys184, Cys187, Cys198, and Cys201. CXXCXGXG motif repeat units follow at residues 146–153 (CKTCNGSG), 162–169 (CPRCNGSG), 184–191 (CSVCRGRG), and 198–205 (CTDCHGQG).

The protein belongs to the DnaJ family. Homodimer. Zn(2+) is required as a cofactor.

Its subcellular location is the cytoplasm. Its function is as follows. Participates actively in the response to hyperosmotic and heat shock by preventing the aggregation of stress-denatured proteins and by disaggregating proteins, also in an autonomous, DnaK-independent fashion. Unfolded proteins bind initially to DnaJ; upon interaction with the DnaJ-bound protein, DnaK hydrolyzes its bound ATP, resulting in the formation of a stable complex. GrpE releases ADP from DnaK; ATP binding to DnaK triggers the release of the substrate protein, thus completing the reaction cycle. Several rounds of ATP-dependent interactions between DnaJ, DnaK and GrpE are required for fully efficient folding. Also involved, together with DnaK and GrpE, in the DNA replication of plasmids through activation of initiation proteins. The polypeptide is Chaperone protein DnaJ (Coxiella burnetii (strain CbuG_Q212) (Coxiella burnetii (strain Q212))).